Consider the following 1001-residue polypeptide: Phosphatidylinositol 4,5-bisphosphate 5-phosphatase A (1001 aa).

A compositionally biased stretch (polar residues) spans 1-12 (MEGQSRSGSAKS). Disordered regions lie at residues 1–130 (MEGQ…VASV) and 144–412 (SASA…QPTC). Positions 6-11 (RSGSAK) match the RSXSXX motif 1 motif. Low complexity predominate over residues 13-28 (GTRTGLGPLPGTHGAL). Residues 29 to 42 (QTGTPSKKVNSSFQ) are compositionally biased toward polar residues. Arginine 56 is modified (asymmetric dimethylarginine; alternate). At arginine 56 the chain carries Omega-N-methylarginine; alternate. Position 65 is an omega-N-methylarginine (arginine 65). Asymmetric dimethylarginine is present on arginine 76. Arginine 83 is subject to Asymmetric dimethylarginine; alternate. Residue arginine 83 is modified to Omega-N-methylarginine; alternate. Over residues 161 to 174 (SPTSRDQKQLSPTS) the composition is skewed to polar residues. Serine 171 bears the Phosphoserine mark. Residues 180–196 (ALATSGLSLALASQEQP) are compositionally biased toward low complexity. Residues 197–210 (PQSPSSPSPVPSPV) are compositionally biased toward pro residues. Positions 284 to 294 (ARPEAPRHSPE) are enriched in basic and acidic residues. Serine 292 and serine 325 each carry phosphoserine. Pro residues predominate over residues 338–348 (VPPPLPKPPRS). Positions 346 to 351 (PRSPSR) match the SH3-binding motif. 2 stretches are compositionally biased toward low complexity: residues 349 to 361 (PSRSPSRSPNRSP) and 394 to 411 (SPVATATSPTSSWSAQPT). Residues 351–356 (RSPSRS) carry the RSXSXX motif 2 motif. Residues 420–723 (ITVVTWNVGT…SDHKPVAARF (304 aa)) form a catalytic region. Residues 724-835 (LLQFAFRDDV…IGVTEPFQIS (112 aa)) form a required for ruffle localization region. The segment at 837–1001 (PTSESASSST…LGLEDGGLGP (165 aa)) is disordered. Residues 838–853 (TSESASSSTDSSGTSS) are compositionally biased toward low complexity. Short sequence motifs (RSXSXX motif) lie at residues 869 to 874 (RSPSPG) and 880 to 885 (RSRSPG). Residue serine 898 is modified to Phosphoserine. Low complexity-rich tracts occupy residues 905–917 (SRSPSPQSRQLPR) and 925–936 (SSGSRGSSEEGP). Residues 906–911 (RSPSPQ) carry the RSXSXX motif 5 motif. Pro residues predominate over residues 937-949 (SGPPGPWAFPPAV). Serine 985 carries the phosphoserine modification.

It belongs to the inositol 1,4,5-trisphosphate 5-phosphatase type II family. Post-translationally, phosphorylated on Ser/Thr residues. In terms of tissue distribution, expressed in heart, brain, kidney, stomach, small intestine and lung. Not expressed in spleen, thymus, skeletal muscle, testis and skin.

Its subcellular location is the cytoplasm. It carries out the reaction 1D-myo-inositol 1,4,5-trisphosphate + H2O = 1D-myo-inositol 1,4-bisphosphate + phosphate. The enzyme catalyses 1D-myo-inositol 1,3,4,5-tetrakisphosphate + H2O = 1D-myo-inositol 1,3,4-trisphosphate + phosphate. It catalyses the reaction a 1,2-diacyl-sn-glycero-3-phospho-(1D-myo-inositol-4,5-bisphosphate) + H2O = a 1,2-diacyl-sn-glycero-3-phospho-(1D-myo-inositol 4-phosphate) + phosphate. In terms of biological role, inositol 5-phosphatase, which converts inositol 1,4,5-trisphosphate to inositol 1,4-bisphosphate. Also converts phosphatidylinositol 4,5-bisphosphate to phosphatidylinositol 4-phosphate and inositol 1,3,4,5-tetrakisphosphate to inositol 1,3,4-trisphosphate in vitro. May be involved in modulation of the function of inositol and phosphatidylinositol polyphosphate-binding proteins that are present at membranes ruffles. This is Phosphatidylinositol 4,5-bisphosphate 5-phosphatase A (Inpp5j) from Rattus norvegicus (Rat).